Consider the following 271-residue polypeptide: Shikimate dehydrogenase (NADP(+)) (271 aa).

Residues 14 to 16 (SQS) and T61 contribute to the shikimate site. K65 functions as the Proton acceptor in the catalytic mechanism. Residues N86 and D101 each contribute to the shikimate site. NADP(+) contacts are provided by residues 125 to 129 (GAGGA), 148 to 153 (NRTHAR), and M212. Y214 serves as a coordination point for shikimate. G236 lines the NADP(+) pocket.

Belongs to the shikimate dehydrogenase family. Homodimer.

It carries out the reaction shikimate + NADP(+) = 3-dehydroshikimate + NADPH + H(+). Its pathway is metabolic intermediate biosynthesis; chorismate biosynthesis; chorismate from D-erythrose 4-phosphate and phosphoenolpyruvate: step 4/7. Its function is as follows. Involved in the biosynthesis of the chorismate, which leads to the biosynthesis of aromatic amino acids. Catalyzes the reversible NADPH linked reduction of 3-dehydroshikimate (DHSA) to yield shikimate (SA). In Edwardsiella ictaluri (strain 93-146), this protein is Shikimate dehydrogenase (NADP(+)).